A 227-amino-acid chain; its full sequence is PKHD-type hydroxylase ABSDF3031 (227 aa).

Residues 78-178 enclose the Fe2OG dioxygenase domain; sequence KIIPPLFNRY…RFASFFWVQS (101 aa). Fe cation is bound by residues His96, Asp98, and His159. Residue Arg169 coordinates 2-oxoglutarate.

Fe(2+) serves as cofactor. L-ascorbate is required as a cofactor.

The sequence is that of PKHD-type hydroxylase ABSDF3031 from Acinetobacter baumannii (strain SDF).